The following is a 154-amino-acid chain: Calmodulin-like protein 6 (154 aa).

EF-hand domains lie at Met1–Ile36, Ile37–Glu72, Val77–Lys112, and Lys115–Phe150. Ca(2+) contacts are provided by Asp14, Asp16, Asp18, Lys20, Glu25, Asp50, Asn52, Asp54, Cys56, Glu61, Asp90, Asn92, Asp94, Glu101, Asp128, Asp130, Asp132, Arg134, and Glu139.

The protein belongs to the calmodulin family.

Functionally, potential calcium sensor. This chain is Calmodulin-like protein 6 (CML6), found in Arabidopsis thaliana (Mouse-ear cress).